We begin with the raw amino-acid sequence, 1070 residues long: DNA-directed RNA polymerase subunit beta (1070 aa).

This sequence belongs to the RNA polymerase beta chain family. In plastids the minimal PEP RNA polymerase catalytic core is composed of four subunits: alpha, beta, beta', and beta''. When a (nuclear-encoded) sigma factor is associated with the core the holoenzyme is formed, which can initiate transcription.

It localises to the plastid. It is found in the chloroplast. The enzyme catalyses RNA(n) + a ribonucleoside 5'-triphosphate = RNA(n+1) + diphosphate. DNA-dependent RNA polymerase catalyzes the transcription of DNA into RNA using the four ribonucleoside triphosphates as substrates. The polypeptide is DNA-directed RNA polymerase subunit beta (Platanus occidentalis (Sycamore)).